We begin with the raw amino-acid sequence, 331 residues long: MNAPHMNDTAADAATLDDAAAPAGRPALTRREQKEAYENNKLFKRIVRQVGQAIGDYNMIEQGDKVMVCLSGGKDSYAMLDVLLRLRERAPIDFDIVAVNLDQKQPGFPEHVLPEYLKQVGVPFHIENQDTYSIVKRLVPEGKTTCSLCSRLRRGILYRVAGELGATKIALGHHRDDIVQTLLLNMFYGGKLKGMPPKLQSDDGKNIVIRPLAYVKETDLEKYAELREFPIIPCNLCGSQPNLKRAEMKALIRDWDKRFPGRVDNMFNALAKVVPSHLMDTTLYPFQSLRATGEADPQGDIAFDEEPCASGDDAAAPGAAQPISIVQFDDL.

The interval 1–33 (MNAPHMNDTAADAATLDDAAAPAGRPALTRREQ) is disordered. Residues 8 to 23 (DTAADAATLDDAAAPA) show a composition bias toward low complexity. The PP-loop motif signature appears at 71 to 76 (SGGKDS). Positions 146, 149, and 237 each coordinate [4Fe-4S] cluster.

This sequence belongs to the TtcA family. Homodimer. Requires Mg(2+) as cofactor. [4Fe-4S] cluster is required as a cofactor.

The protein localises to the cytoplasm. It catalyses the reaction cytidine(32) in tRNA + S-sulfanyl-L-cysteinyl-[cysteine desulfurase] + AH2 + ATP = 2-thiocytidine(32) in tRNA + L-cysteinyl-[cysteine desulfurase] + A + AMP + diphosphate + H(+). Its pathway is tRNA modification. In terms of biological role, catalyzes the ATP-dependent 2-thiolation of cytidine in position 32 of tRNA, to form 2-thiocytidine (s(2)C32). The sulfur atoms are provided by the cysteine/cysteine desulfurase (IscS) system. This is tRNA-cytidine(32) 2-sulfurtransferase from Burkholderia orbicola (strain MC0-3).